Reading from the N-terminus, the 97-residue chain is UPF0235 protein LHK_03181 (97 aa).

Belongs to the UPF0235 family.

In Laribacter hongkongensis (strain HLHK9), this protein is UPF0235 protein LHK_03181.